A 384-amino-acid chain; its full sequence is tRNA(Met) cytidine acetate ligase (384 aa).

Residues 7-20 (VAEY…HEFL), Gly101, Asn153, and Arg178 each bind ATP.

It belongs to the TmcAL family.

It is found in the cytoplasm. The enzyme catalyses cytidine(34) in elongator tRNA(Met) + acetate + ATP = N(4)-acetylcytidine(34) in elongator tRNA(Met) + AMP + diphosphate. Its function is as follows. Catalyzes the formation of N(4)-acetylcytidine (ac(4)C) at the wobble position of elongator tRNA(Met), using acetate and ATP as substrates. First activates an acetate ion to form acetyladenylate (Ac-AMP) and then transfers the acetyl group to tRNA to form ac(4)C34. In Lactobacillus delbrueckii subsp. bulgaricus (strain ATCC 11842 / DSM 20081 / BCRC 10696 / JCM 1002 / NBRC 13953 / NCIMB 11778 / NCTC 12712 / WDCM 00102 / Lb 14), this protein is tRNA(Met) cytidine acetate ligase.